The sequence spans 1085 residues: RecBCD enzyme subunit RecC (1085 aa).

Belongs to the RecC family. As to quaternary structure, heterotrimer of RecB, RecC and RecD. All subunits contribute to DNA-binding.

A helicase/nuclease that prepares dsDNA breaks (DSB) for recombinational DNA repair. Binds to DSBs and unwinds DNA via a highly rapid and processive ATP-dependent bidirectional helicase activity. Holoenzyme degrades any linearized DNA that is unable to undergo homologous recombination. In the holoenzyme this subunit recognizes the wild-type Chi sequence, and when added to isolated RecB increases its ATP-dependent helicase processivity. Unlike the case in E.coli, suppresses RecA-dependent homologous recombination, is instead required for single-strand annealing pathway repair of DSB. The protein is RecBCD enzyme subunit RecC of Mycolicibacterium smegmatis (strain ATCC 700084 / mc(2)155) (Mycobacterium smegmatis).